A 60-amino-acid polypeptide reads, in one-letter code: Large ribosomal subunit protein bL32 (60 aa).

This sequence belongs to the bacterial ribosomal protein bL32 family.

The chain is Large ribosomal subunit protein bL32 (rpmF) from Thermotoga maritima (strain ATCC 43589 / DSM 3109 / JCM 10099 / NBRC 100826 / MSB8).